Reading from the N-terminus, the 100-residue chain is Urease subunit gamma (100 aa).

This sequence belongs to the urease gamma subunit family. In terms of assembly, heterotrimer of UreA (gamma), UreB (beta) and UreC (alpha) subunits. Three heterotrimers associate to form the active enzyme.

Its subcellular location is the cytoplasm. The enzyme catalyses urea + 2 H2O + H(+) = hydrogencarbonate + 2 NH4(+). The protein operates within nitrogen metabolism; urea degradation; CO(2) and NH(3) from urea (urease route): step 1/1. The chain is Urease subunit gamma from Marinobacter nauticus (strain ATCC 700491 / DSM 11845 / VT8) (Marinobacter aquaeolei).